The chain runs to 81 residues: Small ribosomal subunit protein bS16 (81 aa).

The protein belongs to the bacterial ribosomal protein bS16 family.

The chain is Small ribosomal subunit protein bS16 from Lachnoclostridium phytofermentans (strain ATCC 700394 / DSM 18823 / ISDg) (Clostridium phytofermentans).